A 97-amino-acid chain; its full sequence is Large ribosomal subunit protein bL31 (97 aa).

The segment at 75 to 97 (NKTKKSNQAKVEKQTRHRSINEL) is disordered. The segment covering 84-97 (KVEKQTRHRSINEL) has biased composition (basic and acidic residues).

The protein belongs to the bacterial ribosomal protein bL31 family. Type A subfamily. In terms of assembly, part of the 50S ribosomal subunit.

In terms of biological role, binds the 23S rRNA. In Mycoplasma genitalium (strain ATCC 33530 / DSM 19775 / NCTC 10195 / G37) (Mycoplasmoides genitalium), this protein is Large ribosomal subunit protein bL31.